A 344-amino-acid polypeptide reads, in one-letter code: Methylthioribose-1-phosphate isomerase (344 aa).

Residues 55–57 (RGA), Arg98, and Gln202 contribute to the substrate site. Asp243 acts as the Proton donor in catalysis. 253-254 (NK) contacts substrate.

This sequence belongs to the eIF-2B alpha/beta/delta subunits family. MtnA subfamily.

It catalyses the reaction 5-(methylsulfanyl)-alpha-D-ribose 1-phosphate = 5-(methylsulfanyl)-D-ribulose 1-phosphate. It functions in the pathway amino-acid biosynthesis; L-methionine biosynthesis via salvage pathway; L-methionine from S-methyl-5-thio-alpha-D-ribose 1-phosphate: step 1/6. Catalyzes the interconversion of methylthioribose-1-phosphate (MTR-1-P) into methylthioribulose-1-phosphate (MTRu-1-P). This chain is Methylthioribose-1-phosphate isomerase, found in Gemmatimonas aurantiaca (strain DSM 14586 / JCM 11422 / NBRC 100505 / T-27).